The chain runs to 108 residues: DIQMTQTTSSLSASLGDRVTISCRASQDISNYLNWYQQKPDGTVKLLIYYTSRLHSGVPSRFSGSGSGTDYSLTISNLEQEDIATYFCQQGNMLPRTFGGGTKLEIKR.

The segment at 1-23 (DIQMTQTTSSLSASLGDRVTISC) is framework-1. Cys23 and Cys88 are joined by a disulfide. A complementarity-determining-1 region spans residues 24 to 34 (RASQDISNYLN). The segment at 35–49 (WYQQKPDGTVKLLIY) is framework-2. The segment at 50–56 (YTSRLHS) is complementarity-determining-2. Residues 57-88 (GVPSRFSGSGSGTDYSLTISNLEQEDIATYFC) are framework-3. The tract at residues 89-97 (QQGNMLPRT) is complementarity-determining-3. The interval 98 to 108 (FGGGTKLEIKR) is framework-4.

This chain is Ig kappa chain V-V region HP 93G7, found in Mus musculus (Mouse).